The following is a 233-amino-acid chain: Large ribosomal subunit protein uL1 (233 aa).

The protein belongs to the universal ribosomal protein uL1 family. Part of the 50S ribosomal subunit.

Binds directly to 23S rRNA. The L1 stalk is quite mobile in the ribosome, and is involved in E site tRNA release. Functionally, protein L1 is also a translational repressor protein, it controls the translation of the L11 operon by binding to its mRNA. The chain is Large ribosomal subunit protein uL1 from Thermotoga petrophila (strain ATCC BAA-488 / DSM 13995 / JCM 10881 / RKU-1).